Reading from the N-terminus, the 230-residue chain is Probable cytokinin riboside 5'-monophosphate phosphoribohydrolase LOG4 (230 aa).

Substrate contacts are provided by residues E91, R109–K110, and G126–E132.

Belongs to the LOG family.

The enzyme catalyses N(6)-(dimethylallyl)adenosine 5'-phosphate + H2O = N(6)-dimethylallyladenine + D-ribose 5-phosphate. The catalysed reaction is 9-ribosyl-trans-zeatin 5'-phosphate + H2O = trans-zeatin + D-ribose 5-phosphate. Its function is as follows. Cytokinin-activating enzyme working in the direct activation pathway. Phosphoribohydrolase that converts inactive cytokinin nucleotides to the biologically active free-base forms. The polypeptide is Probable cytokinin riboside 5'-monophosphate phosphoribohydrolase LOG4 (LOGL4) (Oryza sativa subsp. japonica (Rice)).